We begin with the raw amino-acid sequence, 428 residues long: Serine--tRNA ligase (428 aa).

231-233 serves as a coordination point for L-serine; sequence TAE. 262–264 is a binding site for ATP; it reads RSE. Position 285 (Glu-285) interacts with L-serine. Position 349–352 (349–352) interacts with ATP; sequence EISS. Ser-385 lines the L-serine pocket.

The protein belongs to the class-II aminoacyl-tRNA synthetase family. Type-1 seryl-tRNA synthetase subfamily. In terms of assembly, homodimer. The tRNA molecule binds across the dimer.

Its subcellular location is the cytoplasm. It carries out the reaction tRNA(Ser) + L-serine + ATP = L-seryl-tRNA(Ser) + AMP + diphosphate + H(+). The enzyme catalyses tRNA(Sec) + L-serine + ATP = L-seryl-tRNA(Sec) + AMP + diphosphate + H(+). It participates in aminoacyl-tRNA biosynthesis; selenocysteinyl-tRNA(Sec) biosynthesis; L-seryl-tRNA(Sec) from L-serine and tRNA(Sec): step 1/1. In terms of biological role, catalyzes the attachment of serine to tRNA(Ser). Is also able to aminoacylate tRNA(Sec) with serine, to form the misacylated tRNA L-seryl-tRNA(Sec), which will be further converted into selenocysteinyl-tRNA(Sec). The polypeptide is Serine--tRNA ligase (Staphylococcus aureus (strain MRSA252)).